Consider the following 444-residue polypeptide: Protein kinase C and casein kinase substrate in neurons protein 1 (444 aa).

Residues S2 and S79 each carry the phosphoserine modification. The 271-residue stretch at 13–283 folds into the F-BAR domain; sequence EETTDSFWEV…AIRGADAQED (271 aa). The stretch at 26-275 forms a coiled coil; it reads KRTVKRIDDG…HVYRELEQAI (250 aa). 2 disordered regions span residues 173–194 and 309–386; these read REMNSKSEQSVTPEQQKKLQDK and LPHT…DDSK. Residue T184 is modified to Phosphothreonine. The segment covering 314-324 has biased composition (basic and acidic residues); sequence TKKEKQPKKAE. The span at 329 to 351 shows a compositional bias: polar residues; it reads TNATGAVESTSQAGDRGSVSSYD. Phosphoserine is present on residues S346, S348, S349, S361, and S365. The region spanning 385–444 is the SH3 domain; that stretch reads SKGVRVRALYDYDGQEQDELSFKAGDELTKLGEEDEQGWCRGRLDSGQLGLYPANYVEAI. Y394 carries the phosphotyrosine modification. Residues S405 and S430 each carry the phosphoserine modification.

It belongs to the PACSIN family. As to quaternary structure, homodimer. May form heterooligomers with other PACSINs. Interacts with both COBL and DBNL. Identified in a complex composed of COBL, PACSIN1 and WASL. Interacts (via SH3 domain) with SYNJ1 and WASL. Interacts (via SH3 domain) with DNM1; the interaction is reduced by DNM1 phosphorylation. Interacts with DNM2 and DNM3. Interacts with MAPT. Interacts with EHD1 and EHD3. Interacts with TRPV4. In terms of processing, phosphorylated by casein kinase 2 (CK2) and protein kinase C (PKC).

The protein resides in the cytoplasm. It localises to the cell projection. Its subcellular location is the synapse. It is found in the synaptosome. The protein localises to the ruffle membrane. The protein resides in the membrane. It localises to the cytoplasmic vesicle membrane. Its subcellular location is the cytosol. It is found in the cell membrane. Functionally, binds to membranes via its F-BAR domain and mediates membrane tubulation. Plays a role in the reorganization of the microtubule cytoskeleton via its interaction with MAPT; this decreases microtubule stability and inhibits MAPT-induced microtubule polymerization. Plays a role in cellular transport processes by recruiting DNM1, DNM2 and DNM3 to membranes. Plays a role in the reorganization of the actin cytoskeleton and in neuron morphogenesis via its interaction with COBL and WASL, and by recruiting COBL to the cell cortex. Plays a role in the regulation of neurite formation, neurite branching and the regulation of neurite length. Required for normal synaptic vesicle endocytosis; this process retrieves previously released neurotransmitters to accommodate multiple cycles of neurotransmission. Required for normal excitatory and inhibitory synaptic transmission. The protein is Protein kinase C and casein kinase substrate in neurons protein 1 (Pacsin1) of Pongo abelii (Sumatran orangutan).